Reading from the N-terminus, the 366-residue chain is Alanine racemase (366 aa).

K33 functions as the Proton acceptor; specific for D-alanine in the catalytic mechanism. K33 is subject to N6-(pyridoxal phosphate)lysine. Position 129 (R129) interacts with substrate. Y253 (proton acceptor; specific for L-alanine) is an active-site residue. Residue M301 coordinates substrate.

The protein belongs to the alanine racemase family. It depends on pyridoxal 5'-phosphate as a cofactor.

The catalysed reaction is L-alanine = D-alanine. It functions in the pathway amino-acid biosynthesis; D-alanine biosynthesis; D-alanine from L-alanine: step 1/1. Functionally, catalyzes the interconversion of L-alanine and D-alanine. May also act on other amino acids. The chain is Alanine racemase (alr) from Xanthomonas oryzae pv. oryzae (strain KACC10331 / KXO85).